The primary structure comprises 128 residues: Holo-[acyl-carrier-protein] synthase (128 aa).

Mg(2+) is bound by residues aspartate 8 and glutamate 58.

This sequence belongs to the P-Pant transferase superfamily. AcpS family. Mg(2+) is required as a cofactor.

It localises to the cytoplasm. It carries out the reaction apo-[ACP] + CoA = holo-[ACP] + adenosine 3',5'-bisphosphate + H(+). Its function is as follows. Transfers the 4'-phosphopantetheine moiety from coenzyme A to a Ser of acyl-carrier-protein. In Alkalilimnicola ehrlichii (strain ATCC BAA-1101 / DSM 17681 / MLHE-1), this protein is Holo-[acyl-carrier-protein] synthase.